The sequence spans 138 residues: Protein Rrf1 (138 aa).

In terms of domain architecture, Response regulatory spans 4–116 (RILVVQEDPD…LLLALVDRAL (113 aa)). 4-aspartylphosphate occurs at positions 13 and 53.

Functionally, may be involved in regulation of gene transcription. Belongs to the family of response regulators, and members of this family involved in the regulation of gene transcription are two-domain proteins. This protein contains only the N-terminal phosphorylation domain and not the C-terminal DNA-binding domain but it may bind to Rrf2 protein and the latter may bind to DNA. This Nitratidesulfovibrio vulgaris (strain ATCC 29579 / DSM 644 / CCUG 34227 / NCIMB 8303 / VKM B-1760 / Hildenborough) (Desulfovibrio vulgaris) protein is Protein Rrf1 (rrf1).